The primary structure comprises 224 residues: Thiamine-triphosphatase (224 aa).

A2 carries the N-acetylalanine modification. Residues 5–201 (LIEVERKFAP…AKLMVYLQRF (197 aa)) enclose the CYTH domain. The Mg(2+) site is built by E7 and E9. Substrate is bound by residues K11, R55, R57, K65, and R125. The Mg(2+) site is built by D145, E157, and E159. Residue E157 participates in substrate binding. K193 lines the substrate pocket.

It belongs to the ThTPase family. As to quaternary structure, monomer. It depends on Mg(2+) as a cofactor.

It is found in the cytoplasm. The enzyme catalyses thiamine triphosphate + H2O = thiamine diphosphate + phosphate + H(+). Hydrolase highly specific for thiamine triphosphate (ThTP). This is Thiamine-triphosphatase (Thtpa) from Mus musculus (Mouse).